An 836-amino-acid polypeptide reads, in one-letter code: Probable ribonuclease ZC3H12B (836 aa).

The disordered stretch occupies residues 1–92 (MTATAEVETP…SPCLDRPSFS (92 aa)). Basic and acidic residues predominate over residues 8 to 28 (ETPKMEKSASKEEKQQPKQDS). Positions 35 to 46 (DSEEWMSSESDP) are enriched in acidic residues. The segment covering 50–60 (SLKSSDNSKSC) has biased composition (polar residues). The span at 70–80 (KEMHSKPHRQL) shows a compositional bias: basic residues. The RNase NYN domain occupies 190-345 (LRPVVIDGSN…LGRHGPSLEN (156 aa)). A C3H1-type zinc finger spans residues 355-380 (EHKKQPCPYGKKCTYGHKCKYYHPER).

This sequence belongs to the ZC3H12 family. Mg(2+) is required as a cofactor.

May function as RNase and regulate the levels of target RNA species. The sequence is that of Probable ribonuclease ZC3H12B (ZC3H12B) from Homo sapiens (Human).